Here is a 748-residue protein sequence, read N- to C-terminus: Chondroadherin-like protein (748 aa).

The first 29 residues, 1 to 29 (MERPQSSIWVFMLLLFMVLLQSPAWHVAA), serve as a signal peptide directing secretion. The LRRNT 1 domain maps to 30-61 (QRCPQTCVCDNSRRHVTCRHQNLTEVPNTIPE). A glycan (N-linked (GlcNAc...) asparagine) is linked at Asn-51. LRR repeat units lie at residues 85-107 (PHLTHLDLRNCQVEMVAEGAFRG), 108-131 (LGRLLLLNLASNRLSTLPQEALDG), 132-155 (LGSLRRLELEGNMLEELRPGTFGA), 156-179 (LGSLTTLNLAHNALVYLPAMAFQG), 181-203 (LRTRWLQLSHNALSVLAPEALAG), 204-227 (LPALRRLSLHHNELQALPGAALSQ), 229-252 (RSLARLELGHNPLTYTGEEDGLAL), 253-275 (PGLRELALDHGSLQALGPRAFAH), and 276-299 (CPRLHTLDLRGNQLTTLPPLQVPG). Residues 309 to 357 (NPLWCACHARPLLEWLVRARVRSDGACRGPRRLRGEALDTLRPSDLRCP) form the LRRCT 1 domain. Residues 352–389 (SDLRCPGDAAAGDGDGDEDEDRPAGPRAPPLRSPHGEA) form a disordered region. In terms of domain architecture, LRRNT 2 spans 394–428 (PCPPACACVAETRHSTCDGRGLQAVPRGFPNDTQL). Cys-395 and Cys-410 are oxidised to a cystine. LRR repeat units follow at residues 423-446 (PNDTQLLDLRRNHFPSVPRAAFPG), 448-470 (RHLVSLHLQHCGVAELEPGALAG), 471-494 (LDRLLYLYLSHNQLSGLSAAALEG), 496-518 (PNLGYLYLEHNRFLRIPGTALRA), 519-542 (LPTLVSLHLQDNAVDRLAPGDLAG), 544-566 (RALRCLYLSGNHITQVSPGALGP), 567-590 (ARELEKLHLDRNRLREVPTGALEG), 591-614 (LPALKELQLSGNPLRALPDGAFQP), 616-639 (GRSLQQLFLNSSDLEQISPRAFSG), and 641-665 (GKGLRSLYLHKNQLQSLPAPLGLSG). N-linked (GlcNAc...) asparagine glycosylation is present at Asn-625. Residues 674-722 (NPFHCDCQLLPLHRWLTGLNLRVGATCATPPSVRGQKVKVAAPVFEACP) enclose the LRRCT 2 domain. 2 disulfide bridges follow: Cys-678–Cys-721 and Cys-680–Cys-700. The interval 728-748 (KAKRTPTSRGSARRTPSLSRH) is disordered. Residues 734–748 (TSRGSARRTPSLSRH) show a composition bias toward polar residues.

The protein belongs to the small leucine-rich proteoglycan (SLRP) family. SLRP class IV subfamily. Associates with collagen and binds to collagen fibrils. As to expression, expressed in cartilage, including articular knee cartilage, where it localizes to the extracellular space in the area immediately surrounding the chondrocytes, not detected in any other tissues (at protein level).

It is found in the secreted. The protein resides in the extracellular space. The protein localises to the extracellular matrix. In terms of biological role, potential negative modulator of chondrocyte differentiation. Inhibits collagen fibrillogenesis in vitro. May influence chondrocyte's differentiation by acting on its cellular collagenous microenvironment. This chain is Chondroadherin-like protein (Chadl), found in Mus musculus (Mouse).